A 275-amino-acid chain; its full sequence is Large ribosomal subunit protein uL2 (275 aa).

Residues 223 to 275 (VAMNPVDHPHGGGEGRTGEAREPVSPWGTPSKGFKTRRNKRTNNMIVQRRKRK) are disordered. Residues 229–244 (DHPHGGGEGRTGEARE) show a composition bias toward basic and acidic residues.

The protein belongs to the universal ribosomal protein uL2 family. As to quaternary structure, part of the 50S ribosomal subunit. Forms a bridge to the 30S subunit in the 70S ribosome.

In terms of biological role, one of the primary rRNA binding proteins. Required for association of the 30S and 50S subunits to form the 70S ribosome, for tRNA binding and peptide bond formation. It has been suggested to have peptidyltransferase activity; this is somewhat controversial. Makes several contacts with the 16S rRNA in the 70S ribosome. This Bordetella petrii (strain ATCC BAA-461 / DSM 12804 / CCUG 43448) protein is Large ribosomal subunit protein uL2.